Here is a 327-residue protein sequence, read N- to C-terminus: MFNETPVFDYEDIQLIPNKCIINSRSEADTTVTLGKYSFKLPVVPANMQTIIDEDVAEMLAKDGYFYIMHRFDEAGRIPFIKRMHEQGLIASISVGVKEYEYEFVTSLKADAPEFITIDIAHGHAESVIKMIQHIKKELPETFVIAGNVGTPEAVRELENAGADATKVGIGPGKVCITKVKTGFGTGGWQLAALRWCAKAARKPIIADGGIRTHGDIAKSIRFGASMVMIGSLFAGHIESPGKTIEVDGEKFKEYYGSASEYQKGAYKNVEGKKILLPAKGHLEDTLVEMEQDLQSSISYAGGRDITSLKHVDYVIVKNSIWNGDSI.

Catalysis depends on cysteine 176, which acts as the Thioimidate intermediate. 205 to 228 contacts NADP(+); that stretch reads IIADGGIRTHGDIAKSIRFGASMV.

It belongs to the IMPDH/GMPR family. GuaC type 2 subfamily.

The enzyme catalyses IMP + NH4(+) + NADP(+) = GMP + NADPH + 2 H(+). In terms of biological role, catalyzes the irreversible NADPH-dependent deamination of GMP to IMP. It functions in the conversion of nucleobase, nucleoside and nucleotide derivatives of G to A nucleotides, and in maintaining the intracellular balance of A and G nucleotides. This Streptococcus suis (strain 05ZYH33) protein is GMP reductase.